We begin with the raw amino-acid sequence, 183 residues long: Ferritin light chain 1 (183 aa).

The region spanning 7–156 (QNYSTEVEAA…NHLTNLRRVA (150 aa)) is the Ferritin-like diiron domain. Fe cation contacts are provided by glutamate 54, glutamate 57, glutamate 58, glutamate 61, and glutamate 64.

It belongs to the ferritin family. In terms of assembly, oligomer of 24 subunits. There are two types of subunits: L (light) chain and H (heavy) chain. The major chain can be light or heavy, depending on the species and tissue type. The functional molecule forms a roughly spherical shell with a diameter of 12 nm and contains a central cavity into which the insoluble mineral iron core is deposited. Interacts with NCOA4.

It localises to the cytoplasm. Its subcellular location is the cytoplasmic vesicle. The protein localises to the autophagosome. It is found in the autolysosome. Functionally, stores iron in a soluble, non-toxic, readily available form. Important for iron homeostasis. Iron is taken up in the ferrous form and deposited as ferric hydroxides after oxidation. Also plays a role in delivery of iron to cells. Mediates iron uptake in capsule cells of the developing kidney. Degraded to release iron upon autophagy activation by nutrient starvation. The sequence is that of Ferritin light chain 1 (Ftl1) from Mus musculus (Mouse).